We begin with the raw amino-acid sequence, 150 residues long: D-aminoacyl-tRNA deacylase (150 aa).

The Gly-cisPro motif, important for rejection of L-amino acids signature appears at 136–137 (GP).

It belongs to the DTD family. Homodimer.

It is found in the cytoplasm. The enzyme catalyses glycyl-tRNA(Ala) + H2O = tRNA(Ala) + glycine + H(+). The catalysed reaction is a D-aminoacyl-tRNA + H2O = a tRNA + a D-alpha-amino acid + H(+). An aminoacyl-tRNA editing enzyme that deacylates mischarged D-aminoacyl-tRNAs. Also deacylates mischarged glycyl-tRNA(Ala), protecting cells against glycine mischarging by AlaRS. Acts via tRNA-based rather than protein-based catalysis; rejects L-amino acids rather than detecting D-amino acids in the active site. By recycling D-aminoacyl-tRNA to D-amino acids and free tRNA molecules, this enzyme counteracts the toxicity associated with the formation of D-aminoacyl-tRNA entities in vivo and helps enforce protein L-homochirality. This is D-aminoacyl-tRNA deacylase from Staphylococcus epidermidis (strain ATCC 35984 / DSM 28319 / BCRC 17069 / CCUG 31568 / BM 3577 / RP62A).